The following is a 270-amino-acid chain: Transmembrane protein 176B (270 aa).

4 consecutive transmembrane segments (helical) span residues 65-85, 95-115, 127-147, and 209-229; these read LALG…GVCL, ASGC…GAIV, ISSL…VLCV, and LFLA…GVGL. Phosphoserine occurs at positions 236, 245, 254, and 258. The disordered stretch occupies residues 237 to 270; sequence SQPLNEEGSEKRLLGENSVPPSPSREQTSTAIVL. Positions 260–270 are enriched in polar residues; it reads SREQTSTAIVL.

This sequence belongs to the TMEM176 family. As to expression, expressed in lung and dermal fibroblasts.

The protein resides in the nucleus membrane. May play a role in the process of maturation of dendritic cells. Required for the development of cerebellar granule cells. The chain is Transmembrane protein 176B (TMEM176B) from Homo sapiens (Human).